Consider the following 146-residue polypeptide: Acidic phospholipase A2 S14-72F (146 aa).

Positions 1–19 are cleaved as a signal peptide; sequence MYPAHLLVLLAVCVSLLGA. Residues 20 to 27 constitute a propeptide that is removed on maturation; it reads ASIPPQPL. 7 disulfide bridges follow: cysteine 38–cysteine 98, cysteine 54–cysteine 145, cysteine 56–cysteine 72, cysteine 71–cysteine 126, cysteine 78–cysteine 119, cysteine 87–cysteine 112, and cysteine 105–cysteine 117. Ca(2+)-binding residues include tyrosine 55, glycine 57, and glycine 59. The active site involves histidine 75. Aspartate 76 contacts Ca(2+). Aspartate 120 is a catalytic residue.

The protein belongs to the phospholipase A2 family. Group I subfamily. D49 sub-subfamily. Requires Ca(2+) as cofactor. As to expression, expressed by the venom gland.

The protein resides in the secreted. The enzyme catalyses a 1,2-diacyl-sn-glycero-3-phosphocholine + H2O = a 1-acyl-sn-glycero-3-phosphocholine + a fatty acid + H(+). In terms of biological role, snake venom phospholipase A2 (PLA2) that inhibits collagen-induced platelet aggregation. PLA2 catalyzes the calcium-dependent hydrolysis of the 2-acyl groups in 3-sn-phosphoglycerides. This is Acidic phospholipase A2 S14-72F from Austrelaps superbus (Lowland copperhead snake).